The chain runs to 317 residues: Protein-methionine-sulfoxide reductase catalytic subunit MsrP (317 aa).

The segment at residues 1–40 is a signal peptide (tat-type signal); sequence MKKLTSNDVTPEEIFYQRRKIIKAFGLSAVATALPTFSFA. Residues asparagine 71, 74 to 75, cysteine 129, threonine 164, asparagine 216, arginine 221, and 232 to 234 contribute to the Mo-molybdopterin site; these read YE and SIK.

The protein belongs to the MsrP family. In terms of assembly, heterodimer of a catalytic subunit (MsrP) and a heme-binding subunit (MsrQ). The cofactor is Mo-molybdopterin. In terms of processing, predicted to be exported by the Tat system. The position of the signal peptide cleavage has not been experimentally proven.

The protein resides in the periplasm. The enzyme catalyses L-methionyl-[protein] + a quinone + H2O = L-methionyl-(S)-S-oxide-[protein] + a quinol. The catalysed reaction is L-methionyl-[protein] + a quinone + H2O = L-methionyl-(R)-S-oxide-[protein] + a quinol. Its function is as follows. Part of the MsrPQ system that repairs oxidized periplasmic proteins containing methionine sulfoxide residues (Met-O), using respiratory chain electrons. Thus protects these proteins from oxidative-stress damage caused by reactive species of oxygen and chlorine generated by the host defense mechanisms. MsrPQ is essential for the maintenance of envelope integrity under bleach stress, rescuing a wide series of structurally unrelated periplasmic proteins from methionine oxidation. The catalytic subunit MsrP is non-stereospecific, being able to reduce both (R-) and (S-) diastereoisomers of methionine sulfoxide. This is Protein-methionine-sulfoxide reductase catalytic subunit MsrP from Histophilus somni (strain 2336) (Haemophilus somnus).